The sequence spans 388 residues: G2/mitotic-specific cyclin-B (388 aa).

The protein belongs to the cyclin family. Cyclin AB subfamily. Interacts with the CDK1 protein kinase to form a serine/threonine kinase holoenzyme complex also known as maturation promoting factor (MPF). The cyclin subunit imparts substrate specificity to the complex.

Functionally, essential for the control of the cell cycle at the G2/M (mitosis) transition. In Marthasterias glacialis (Spiny starfish), this protein is G2/mitotic-specific cyclin-B.